The chain runs to 316 residues: Retinol dehydrogenase 12 (316 aa).

NADP(+) is bound at residue 46-52 (GANTGIG). Substrate is bound at residue Ser175. Residue Tyr200 is the Proton acceptor of the active site.

This sequence belongs to the short-chain dehydrogenases/reductases (SDR) family. In terms of tissue distribution, expressed in the retina.

The catalysed reaction is all-trans-retinol + NADP(+) = all-trans-retinal + NADPH + H(+). It catalyses the reaction 11-cis-retinol + NADP(+) = 11-cis-retinal + NADPH + H(+). It carries out the reaction 9-cis-retinol + NADP(+) = 9-cis-retinal + NADPH + H(+). The enzyme catalyses a 4-hydroxynonen-1-ol + NADP(+) = a 4-hydroxynonenal + NADPH + H(+). The catalysed reaction is (E)-non-2-en-1-ol + NADP(+) = (E)-non-2-enal + NADPH + H(+). It catalyses the reaction (Z)-non-6-en-1-ol + NADP(+) = (Z)-non-6-enal + NADPH + H(+). It carries out the reaction nonan-1-ol + NADP(+) = nonanal + NADPH + H(+). It participates in cofactor metabolism; retinol metabolism. Functionally, retinoids dehydrogenase/reductase with a clear preference for NADP. Displays high activity towards 9-cis, 11-cis and all-trans-retinal. Shows very weak activity towards 13-cis-retinol. Also exhibits activity, albeit with lower affinity than for retinaldehydes, towards lipid peroxidation products (C9 aldehydes) such as 4-hydroxynonenal and trans-2-nonenal. May play an important function in photoreceptor cells to detoxify 4-hydroxynonenal and potentially other toxic aldehyde products resulting from lipid peroxidation. Has no dehydrogenase activity towards steroids. The protein is Retinol dehydrogenase 12 (RDH12) of Bos taurus (Bovine).